The sequence spans 337 residues: Mitochondrial glutathione transporter SLC25A40 (337 aa).

Solcar repeat units lie at residues 14 to 132 (VTPL…LSAF), 140 to 224 (NETR…LKRW), and 234 to 328 (PTFM…GKSF). The next 6 helical transmembrane spans lie at 20 to 40 (MIAS…LDVV), 104 to 124 (LWSG…IYFT), 146 to 166 (IVAG…LELI), 200 to 221 (WAPT…YENL), 240 to 260 (FTSG…FDVV), and 299 to 319 (GLFT…AIMI).

The protein belongs to the mitochondrial carrier (TC 2.A.29) family.

It is found in the mitochondrion inner membrane. It carries out the reaction glutathione(in) = glutathione(out). Probable mitochondrial transporter required for glutathione import into mitochondria. Glutathione, which plays key roles in oxidative metabolism, is produced exclusively in the cytosol and is imported in many organelles. Mitochondrial glutathione is required for the activity and stability of proteins containing iron-sulfur clusters, as well as erythropoiesis. The polypeptide is Mitochondrial glutathione transporter SLC25A40 (Mus musculus (Mouse)).